Here is a 1342-residue protein sequence, read N- to C-terminus: DNA-directed RNA polymerase subunit beta (1342 aa).

2 positions are modified to N6-acetyllysine: lysine 1022 and lysine 1200.

Belongs to the RNA polymerase beta chain family. In terms of assembly, the RNAP catalytic core consists of 2 alpha, 1 beta, 1 beta' and 1 omega subunit. When a sigma factor is associated with the core the holoenzyme is formed, which can initiate transcription.

The catalysed reaction is RNA(n) + a ribonucleoside 5'-triphosphate = RNA(n+1) + diphosphate. In terms of biological role, DNA-dependent RNA polymerase catalyzes the transcription of DNA into RNA using the four ribonucleoside triphosphates as substrates. The protein is DNA-directed RNA polymerase subunit beta of Escherichia coli O139:H28 (strain E24377A / ETEC).